We begin with the raw amino-acid sequence, 220 residues long: HTH-type transcriptional repressor KstR (220 aa).

In terms of domain architecture, HTH tetR-type spans 36 to 96; sequence RERRKRILDA…SALGREFSRI (61 aa). A DNA-binding region (H-T-H motif) is located at residues 59–78; sequence QMRAVADRADVAVGTLYRYF.

In terms of assembly, homodimer.

Controls the expression of genes used for utilizing diverse lipids as energy sources. This chain is HTH-type transcriptional repressor KstR (kstR), found in Mycobacterium tuberculosis (strain ATCC 25618 / H37Rv).